The following is a 268-amino-acid chain: Inositol monophosphatase 3 (268 aa).

Positions 71, 91, 93, and 94 each coordinate Mg(2+). Glutamate 71 contacts substrate. Residues 93–96 (LDGT), 194–196 (GSC), glutamate 213, and aspartate 221 contribute to the substrate site. Aspartate 221 is a binding site for Mg(2+).

The protein belongs to the inositol monophosphatase superfamily. It depends on Mg(2+) as a cofactor. As to expression, expressed in the shoot apex, roots, stems, leaves, flowers and young and mature green fruits.

The enzyme catalyses a myo-inositol phosphate + H2O = myo-inositol + phosphate. Its pathway is polyol metabolism; myo-inositol biosynthesis; myo-inositol from D-glucose 6-phosphate: step 2/2. Functionally, responsible for the provision of inositol required for synthesis of phosphatidylinositol and polyphosphoinositides. This chain is Inositol monophosphatase 3 (IMP3), found in Solanum lycopersicum (Tomato).